The sequence spans 151 residues: Transcriptional repressor NrdR (151 aa).

A zinc finger spans residues 3–34 (CPYCGSLDNKVIDSRLSRDDTETRRRRECLEC). One can recognise an ATP-cone domain in the interval 49 to 139 (LMIVKKDGRR…VYREFKDVHD (91 aa)).

Belongs to the NrdR family. It depends on Zn(2+) as a cofactor.

Negatively regulates transcription of bacterial ribonucleotide reductase nrd genes and operons by binding to NrdR-boxes. The protein is Transcriptional repressor NrdR of Desulfosudis oleivorans (strain DSM 6200 / JCM 39069 / Hxd3) (Desulfococcus oleovorans).